Consider the following 199-residue polypeptide: Recombination protein RecR (199 aa).

A C4-type zinc finger spans residues 57–72 (CSICGNITESDPCMIC). One can recognise a Toprim domain in the interval 80–176 (SKVVVVEQPK…KVTRLAHGLA (97 aa)).

The protein belongs to the RecR family.

May play a role in DNA repair. It seems to be involved in an RecBC-independent recombinational process of DNA repair. It may act with RecF and RecO. The protein is Recombination protein RecR of Ligilactobacillus salivarius (strain UCC118) (Lactobacillus salivarius).